A 130-amino-acid polypeptide reads, in one-letter code: Protein CPn_0713/CP_0033/CPj0713/CpB0740 (130 aa).

It belongs to the chlamydial CPn_0713/CT_663/TC_0034 family.

This chain is Protein CPn_0713/CP_0033/CPj0713/CpB0740, found in Chlamydia pneumoniae (Chlamydophila pneumoniae).